Here is a 353-residue protein sequence, read N- to C-terminus: Forkhead box protein I3-A (353 aa).

The segment at residues 116 to 210 (RPPYSYSALI…DNGNFRRKRK (95 aa)) is a DNA-binding region (fork-head). The disordered stretch occupies residues 201 to 255 (DNGNFRRKRKRKSDSLAEEEGKGYSGSDSALSSPKNPSDSSERGNSPISTDQAPC). The Nuclear localization signal signature appears at 206–212 (RRKRKRK). The span at 213-222 (SDSLAEEEGK) shows a compositional bias: basic and acidic residues. Positions 226-252 (GSDSALSSPKNPSDSSERGNSPISTDQ) are enriched in polar residues.

In terms of tissue distribution, expressed in ionocyte precursors.

Its subcellular location is the nucleus. Transcription factor required for epithelial cell differentiation. Involved in specification of skin ionocytes from epidermal precursors. The chain is Forkhead box protein I3-A from Danio rerio (Zebrafish).